A 292-amino-acid chain; its full sequence is MEITASLVKELRERTGVGMMECKKALSENAGNIDAAVEWLRKSGLVKADKKAGRIAAEGRIVVVHDGGKAVLVEINSETDFVAKDSHFLAFAEAVAQAALVAGAVDVEALKSVKLPSGETVEEARAAVIAKIGENVRVRRLARIDSANNVAAYVHGGRIGVLVEVKGGDVELARGIAMHVAAMNPPYNKVADVSAEFLEKEKEIELSKMSEKDKSKPADILEKIISGKINKIVKEVTLYGQPYVLNADQSVEQVVKAAGADVIGFQRMEVGEGIEKIVEDYASEVMKQVGLS.

Residues Thr-79–Val-82 form an involved in Mg(2+) ion dislocation from EF-Tu region.

The protein belongs to the EF-Ts family.

It is found in the cytoplasm. Functionally, associates with the EF-Tu.GDP complex and induces the exchange of GDP to GTP. It remains bound to the aminoacyl-tRNA.EF-Tu.GTP complex up to the GTP hydrolysis stage on the ribosome. The chain is Elongation factor Ts from Xylella fastidiosa (strain 9a5c).